The following is a 107-amino-acid chain: UPF0060 membrane protein glr4174 (107 aa).

4 consecutive transmembrane segments (helical) span residues 1–21 (MALL…FAFW), 26–46 (LGKN…FAWL), 58–78 (AYAA…WLVE), and 87–107 (LAGA…DRSP).

The protein belongs to the UPF0060 family.

The protein localises to the cell inner membrane. This chain is UPF0060 membrane protein glr4174, found in Gloeobacter violaceus (strain ATCC 29082 / PCC 7421).